The sequence spans 391 residues: Multidrug resistance protein MdtL (391 aa).

12 helical membrane passes run 4 to 24, 42 to 62, 69 to 89, 93 to 113, 131 to 151, 158 to 178, 203 to 222, 245 to 265, 269 to 289, 293 to 313, 324 to 346, and 363 to 383; these read FLIC…MYLV, IAFS…GKVA, PVAI…SLAE, LFLA…VVAF, LLNG…HLIM, SLFW…LFIL, FFLS…LTFV, ALTA…LGIF, TLMI…AVSP, ISLF…GVAM, AGVA…IWLA, and ACSI…PVAA.

Belongs to the major facilitator superfamily. DHA1 family. MdtL (TC 2.A.1.2.22) subfamily.

The protein localises to the cell inner membrane. Confers resistance to chloramphenicol. The polypeptide is Multidrug resistance protein MdtL (Escherichia fergusonii (strain ATCC 35469 / DSM 13698 / CCUG 18766 / IAM 14443 / JCM 21226 / LMG 7866 / NBRC 102419 / NCTC 12128 / CDC 0568-73)).